We begin with the raw amino-acid sequence, 337 residues long: Hairy/enhancer-of-split related with YRPW motif protein 2 (337 aa).

The interval 1–52 (MKRPCEETTSESDMDETIDVGSENNYSGQSTSSVIRLNSPTTTSQIMARKKR) is disordered. Positions 8–18 (TTSESDMDETI) are enriched in acidic residues. The span at 22–46 (SENNYSGQSTSSVIRLNSPTTTSQI) shows a compositional bias: polar residues. Residues 47 to 116 (MARKKRRGII…GGKGYFDAHA (70 aa)) form a transcriptional repression and interaction with NCOR1 and SIN3A region. A bHLH domain is found at 48–103 (ARKKRRGIIEKRRRDRINNSLSELRRLVPTAFEKQGSAKLEKAEILQMTVDHLKML). Residues 122–157 (MSIGFRECLTEVARYLSSVEGLDSSDPLRVRLVSHL) enclose the Orange domain. Polar residues predominate over residues 307–325 (LSVSATSSPQQTSSGTNNK). Residues 307 to 337 (LSVSATSSPQQTSSGTNNKPYRPWGTEVGAF) form a disordered region. The YRPW motif signature appears at 327 to 330 (YRPW).

Belongs to the HEY family. As to quaternary structure, may self-associate. Interacts with GATA4, HES1 and HEYL. Interacts with HDAC1, NCOR1 and SIN3A. Interacts with ARNT and GATA6.

The protein resides in the nucleus. In terms of biological role, downstream effector of Notch signaling which may be required for cardiovascular development. Transcriptional repressor which binds preferentially to the canonical E box sequence 5'-CACGTG-3'. Represses transcription by the cardiac transcriptional activators GATA4 and GATA6. In Homo sapiens (Human), this protein is Hairy/enhancer-of-split related with YRPW motif protein 2 (HEY2).